The following is a 365-amino-acid chain: N5-carboxyaminoimidazole ribonucleotide synthase (365 aa).

ATP is bound by residues R102, K143, 148–154 (GYDGKGQ), 177–180 (EEYV), E185, and 256–257 (NE). The region spanning 106–286 (KLFYRQHNLP…QFEQHLRAII (181 aa)) is the ATP-grasp domain.

This sequence belongs to the PurK/PurT family. As to quaternary structure, homodimer.

The enzyme catalyses 5-amino-1-(5-phospho-beta-D-ribosyl)imidazole + hydrogencarbonate + ATP = 5-carboxyamino-1-(5-phospho-D-ribosyl)imidazole + ADP + phosphate + 2 H(+). Its pathway is purine metabolism; IMP biosynthesis via de novo pathway; 5-amino-1-(5-phospho-D-ribosyl)imidazole-4-carboxylate from 5-amino-1-(5-phospho-D-ribosyl)imidazole (N5-CAIR route): step 1/2. Its function is as follows. Catalyzes the ATP-dependent conversion of 5-aminoimidazole ribonucleotide (AIR) and HCO(3)(-) to N5-carboxyaminoimidazole ribonucleotide (N5-CAIR). The chain is N5-carboxyaminoimidazole ribonucleotide synthase from Saccharolobus solfataricus (strain ATCC 35092 / DSM 1617 / JCM 11322 / P2) (Sulfolobus solfataricus).